A 51-amino-acid chain; its full sequence is Small polypeptide DEVIL 1 (51 aa).

A disordered region spans residues 1-25 (MEMKRVMMSSAERSKEKKRSISRRL). Residues 16–25 (EKKRSISRRL) show a composition bias toward basic residues. The segment at 20–51 (SISRRLGKYMKEQKGRIYIIRRCMVMLLCSHD) is required for DVL/RTFL small polypeptide activity. The chain crosses the membrane as a helical span at residues 28–44 (YMKEQKGRIYIIRRCMV).

Belongs to the DVL/RTFL small polypeptides family. In terms of tissue distribution, mostly expressed in leaves and, to a lower extent, in roots and stems.

It localises to the cell membrane. In terms of biological role, small polypeptide acting as a regulatory molecule which coordinates cellular responses required for differentiation, growth and development, including leaves shape, pedicule elongation, inflorescence organization and fruit maturation, probably by restricting polar cell proliferation in lateral organs and coordinating socket cell recruitment and differentiation at trichome sites. The chain is Small polypeptide DEVIL 1 from Arabidopsis thaliana (Mouse-ear cress).